The sequence spans 177 residues: Large ribosomal subunit protein uL6 (177 aa).

The protein belongs to the universal ribosomal protein uL6 family. In terms of assembly, part of the 50S ribosomal subunit.

In terms of biological role, this protein binds to the 23S rRNA, and is important in its secondary structure. It is located near the subunit interface in the base of the L7/L12 stalk, and near the tRNA binding site of the peptidyltransferase center. This Enterobacter sp. (strain 638) protein is Large ribosomal subunit protein uL6.